The chain runs to 243 residues: Transcription factor TCP6 (243 aa).

Residues 1–55 (MVMEPKKNQNLPSFLNPSRQNQDNDKKRKQTEVKGFDIVVGEKRKKKENEEEDQE) form a disordered region. Over residues 8–21 (NQNLPSFLNPSRQN) the composition is skewed to polar residues. Basic and acidic residues predominate over residues 22–35 (QDNDKKRKQTEVKG). Residues 42-66 (EKRKKKENEEEDQEIQILYEKEKKK) are a coiled coil. Residues 68–122 (NKDRHLKVEGRGRRVRLPPLCAARIYQLTKELGHKSDGETLEWLLQHAEPSILSA) form the TCP domain.

In terms of assembly, interacts with SPL.

It is found in the nucleus. The polypeptide is Transcription factor TCP6 (TCP6) (Arabidopsis thaliana (Mouse-ear cress)).